Here is a 294-residue protein sequence, read N- to C-terminus: MKNLENKSFIIRCLKAAASPSGVCRYGNTFSWLQLSFLFLFLTACLMAPLAVSFVKMDRFSVSSFMPSAIQGVNDQFADQLQGFQIRNGKLTGGKSSERIEDGQNVMAVDMKHEYETSGENGRLKVTGFENAIIFQPDQLVITDQNETGFSVGYAKMDVKLEKPNVHDVEVLIDTLWLAQYKPMIMMLAYTVVSMIQLLLTFVLAGGLWITKISNMVSIASFKEAASIAICASALPAFAAAAIGMVHFDLITVLMIHSCGVTLMISFAFRYLTKTRRDNGNLHSGGNDDKSAVI.

Transmembrane regions (helical) follow at residues 35–55 (LSFL…VSFV), 184–204 (MIMM…TFVL), 228–248 (IAIC…MVHF), and 249–269 (DLIT…SFAF).

Its subcellular location is the cell membrane. In terms of biological role, could have a role in maltodextrin utilization. This Bacillus subtilis (strain 168) protein is Putative maltodextrin utilization protein YvdJ (yvdJ).